A 297-amino-acid polypeptide reads, in one-letter code: Glutamyl-Q tRNA(Asp) synthetase (297 aa).

L-glutamate contacts are provided by residues 7–11 and E43; that span reads RFAPS. The 'HIGH' region signature appears at 10–20; sequence PSPTGPLHFGS. The Zn(2+) site is built by C99, C101, Y122, and C126. 2 residues coordinate L-glutamate: Y182 and R200. The short motif at 238–242 is the 'KMSKS' region element; it reads KLSKQ. K241 is a binding site for ATP.

It belongs to the class-I aminoacyl-tRNA synthetase family. GluQ subfamily. Zn(2+) serves as cofactor.

Catalyzes the tRNA-independent activation of glutamate in presence of ATP and the subsequent transfer of glutamate onto a tRNA(Asp). Glutamate is transferred on the 2-amino-5-(4,5-dihydroxy-2-cyclopenten-1-yl) moiety of the queuosine in the wobble position of the QUC anticodon. This Burkholderia pseudomallei (strain K96243) protein is Glutamyl-Q tRNA(Asp) synthetase.